Reading from the N-terminus, the 313-residue chain is Ribosomal RNA small subunit methyltransferase H (313 aa).

S-adenosyl-L-methionine contacts are provided by residues 36–38, D56, F80, D102, and Q109; that span reads GGH.

The protein belongs to the methyltransferase superfamily. RsmH family.

The protein localises to the cytoplasm. It carries out the reaction cytidine(1402) in 16S rRNA + S-adenosyl-L-methionine = N(4)-methylcytidine(1402) in 16S rRNA + S-adenosyl-L-homocysteine + H(+). In terms of biological role, specifically methylates the N4 position of cytidine in position 1402 (C1402) of 16S rRNA. The protein is Ribosomal RNA small subunit methyltransferase H of Haemophilus ducreyi (strain 35000HP / ATCC 700724).